Here is a 92-residue protein sequence, read N- to C-terminus: UPF0250 protein Rmag_0541 (92 aa).

It belongs to the UPF0250 family.

The sequence is that of UPF0250 protein Rmag_0541 from Ruthia magnifica subsp. Calyptogena magnifica.